Reading from the N-terminus, the 200-residue chain is High mobility group protein B3 (200 aa).

At lysine 3 the chain carries N6-acetyllysine. 2 DNA-binding regions (HMG box) span residues 9–79 (PKGK…KDYG) and 93–161 (PKRP…ADYK). Cysteine sulfonic acid (-SO3H); alternate is present on cysteine 23. Cysteine 23 and cysteine 45 are oxidised to a cystine. 2 positions are modified to N6-acetyllysine: lysine 30 and lysine 43. Cysteine 45 is subject to Cysteine sulfonic acid (-SO3H); alternate. A disordered region spans residues 71–97 (YDREMKDYGPAKGGKKKKDPNAPKRPP). The residue at position 98 (serine 98) is a Phosphoserine. At cysteine 104 the chain carries Cysteine sulfonic acid (-SO3H). An N6-acetyllysine mark is found at lysine 112 and lysine 139. Residues 163–200 (KGKFDGAKGAAKVARKKVEEEDEEDEEEEEEEEEEEDE) form a disordered region. The segment covering 182–200 (EEDEEDEEEEEEEEEEEDE) has biased composition (acidic residues).

Belongs to the HMGB family. Reduction/oxidation of cysteine residues Cys-23, Cys-45 and Cys-104 and a possible intramolecular disulfide bond involving Cys-23 and Cys-45 give rise to different redox forms with specific functional activities in various cellular compartments: 1- fully reduced HMGB3 (HMGB3C23hC45hC104h), 2- disulfide HMGB3 (HMGB3C23-C45C104h) and 3- sulfonyl HMGB3 (HMGB3C23soC45soC104so).

The protein resides in the nucleus. It localises to the chromosome. Its subcellular location is the cytoplasm. Multifunctional protein with various roles in different cellular compartments. May act in a redox sensitive manner. Associates with chromatin and binds DNA with a preference for non-canonical DNA structures such as single-stranded DNA. Can bend DNA and enhance DNA flexibility by looping thus providing a mechanism to promote activities on various gene promoters. Proposed to be involved in the innate immune response to nucleic acids by acting as a cytoplasmic promiscuous immunogenic DNA/RNA sensor. Negatively regulates B-cell and myeloid cell differentiation. In hematopoietic stem cells may regulate the balance between self-renewal and differentiation. Involved in negative regulation of canonical Wnt signaling. In Bos taurus (Bovine), this protein is High mobility group protein B3 (HMGB3).